Here is a 484-residue protein sequence, read N- to C-terminus: PTS system N-acetylmuramic acid-specific EIIBC component (484 aa).

A PTS EIIB type-1 domain is found at 1-89 (MAKITSNTVS…NQLIDSLTSG (89 aa)). C28 acts as the Phosphocysteine intermediate; for EIIB activity in catalysis. In terms of domain architecture, PTS EIIC type-1 spans 125–484 (SKFATIFTPL…FFGCKDVDLS (360 aa)). Transmembrane regions (helical) follow at residues 127–147 (FATIFTPLIPGFIAAGLLLGF), 168–188 (LIAYMKVFGKGLFAFLSILIG), 194–214 (AFGGSGVNGAILASLFVLGYN), 228–248 (FFGFAIDPRGNIIGVLLAAII), 266–286 (MILTSVITLLIMGAVTFLIIM), 310–330 (AAILAGLFLISVVFGIHQGFV), 345–365 (LFPILAMAGGGQVGASMALYF), 379–399 (GAIIPGLLGIGEPLIYGVTLP), 409–429 (IGGAAGGFFIGLVSYLGLPVG), and 451–471 (IFPGMMVFVAGLLISYIVGFL).

It is found in the cell inner membrane. It carries out the reaction N-acetyl-beta-D-muramate(out) + N(pros)-phospho-L-histidyl-[protein] = N-acetyl-beta-D-muramate 6-phosphate(in) + L-histidyl-[protein]. Its function is as follows. The phosphoenolpyruvate-dependent sugar phosphotransferase system (sugar PTS), a major carbohydrate active transport system, catalyzes the phosphorylation of incoming sugar substrates concomitantly with their translocation across the cell membrane. This system is involved in N-acetylmuramic acid (MurNAc) transport, yielding cytoplasmic MurNAc-6-P. Is also able to take up anhydro-N-acetylmuramic acid (anhMurNAc), but cannot phosphorylate the carbon 6, probably because of the 1,6-anhydro ring. The polypeptide is PTS system N-acetylmuramic acid-specific EIIBC component (murP) (Vibrio parahaemolyticus serotype O3:K6 (strain RIMD 2210633)).